The sequence spans 338 residues: Fructose-1,6-bisphosphatase class 1 (338 aa).

The Mg(2+) site is built by Glu-92, Asp-114, Leu-116, and Asp-117. Residues Asp-117–Ser-120 and Asn-210 each bind substrate. A Mg(2+)-binding site is contributed by Glu-284.

The protein belongs to the FBPase class 1 family. Homotetramer. It depends on Mg(2+) as a cofactor.

Its subcellular location is the cytoplasm. The enzyme catalyses beta-D-fructose 1,6-bisphosphate + H2O = beta-D-fructose 6-phosphate + phosphate. The protein operates within carbohydrate biosynthesis; gluconeogenesis. This Halorhodospira halophila (strain DSM 244 / SL1) (Ectothiorhodospira halophila (strain DSM 244 / SL1)) protein is Fructose-1,6-bisphosphatase class 1.